We begin with the raw amino-acid sequence, 36 residues long: Thrombin (36 aa).

The 18-residue stretch at 19–36 (IVKGIDAEVASAPMQVML) folds into the Peptidase S1 domain.

This sequence belongs to the peptidase S1 family. As to quaternary structure, forms a heterodimer with SERPINA5. In terms of processing, the gamma-carboxyglutamyl residues, which bind calcium ions, result from the carboxylation of glutamyl residues by a microsomal enzyme, the vitamin K-dependent carboxylase. The modified residues are necessary for the calcium-dependent interaction with a negatively charged phospholipid surface, which is essential for the conversion of prothrombin to thrombin. Post-translationally, N-glycosylated. In terms of tissue distribution, expressed by the liver and secreted in plasma.

The protein resides in the secreted. It catalyses the reaction Selective cleavage of Arg-|-Gly bonds in fibrinogen to form fibrin and release fibrinopeptides A and B.. With respect to regulation, inhibited by SERPINA5. Functionally, thrombin, which cleaves bonds after Arg and Lys, converts fibrinogen to fibrin and activates factors V, VII, VIII, XIII, and, in complex with thrombomodulin, protein C. Functions in blood homeostasis, inflammation and wound healing. In Salmo salar (Atlantic salmon), this protein is Thrombin.